The chain runs to 488 residues: Argininosuccinate lyase (488 aa).

Belongs to the lyase 1 family. Argininosuccinate lyase subfamily.

It is found in the cytoplasm. The enzyme catalyses 2-(N(omega)-L-arginino)succinate = fumarate + L-arginine. The protein operates within amino-acid biosynthesis; L-arginine biosynthesis; L-arginine from L-ornithine and carbamoyl phosphate: step 3/3. The protein is Argininosuccinate lyase of Corynebacterium jeikeium (strain K411).